We begin with the raw amino-acid sequence, 310 residues long: Glutaminase (310 aa).

Residues Ser-67, Asn-118, Glu-161, Asn-168, Tyr-192, Tyr-244, and Val-262 each coordinate substrate.

It belongs to the glutaminase family. As to quaternary structure, homotetramer.

The enzyme catalyses L-glutamine + H2O = L-glutamate + NH4(+). The chain is Glutaminase from Legionella pneumophila subsp. pneumophila (strain Philadelphia 1 / ATCC 33152 / DSM 7513).